Reading from the N-terminus, the 257-residue chain is NAD kinase (257 aa).

The active-site Proton acceptor is D46. Residues 46-47 (DG), 116-117 (NE), D146, A154, 157-162 (TAYNLS), and N218 each bind NAD(+).

It belongs to the NAD kinase family. It depends on a divalent metal cation as a cofactor.

Its subcellular location is the cytoplasm. It catalyses the reaction NAD(+) + ATP = ADP + NADP(+) + H(+). Involved in the regulation of the intracellular balance of NAD and NADP, and is a key enzyme in the biosynthesis of NADP. Catalyzes specifically the phosphorylation on 2'-hydroxyl of the adenosine moiety of NAD to yield NADP. The polypeptide is NAD kinase (Brucella melitensis biotype 1 (strain ATCC 23456 / CCUG 17765 / NCTC 10094 / 16M)).